The following is a 1148-amino-acid chain: Pyruvate carboxylase (1148 aa).

Residues 1–457 (MSQQSIQKVL…DTSFIDTTPE (457 aa)) form the Biotin carboxylation domain. Residues K121, E205, and H240 each coordinate ATP. In terms of domain architecture, ATP-grasp spans 125 to 321 (REQAEKAGIP…IVQTQILVAQ (197 aa)). K242 is a catalytic residue. Residues 534 to 802 (VLLTDTTFRD…RPEMNVQGVE (269 aa)) enclose the Pyruvate carboxyltransferase domain. Substrate-binding positions include 542 to 546 (RDAHQ) and R615. D543 lines the a divalent metal cation pocket. A divalent metal cation-binding residues include K712, H741, and H743. K712 carries the post-translational modification N6-carboxylysine. Position 876 (T876) interacts with substrate. One can recognise a Biotinyl-binding domain in the interval 1071 to 1146 (KADRTNPSHI…QTGDLLLEIE (76 aa)). K1112 carries the N6-biotinyllysine modification.

In terms of assembly, homotetramer. At very low potassium concentrations, when intracellular levels of c-di-AMP are low, interacts with apo-DarB. c-di-AMP inhibits the binding of DarB to PYC. Does not bind directly c-di-AMP. Biotin is required as a cofactor.

It carries out the reaction hydrogencarbonate + pyruvate + ATP = oxaloacetate + ADP + phosphate + H(+). Its activity is regulated as follows. Activated by the cyclic di-AMP (c-di-AMP) receptor DarB in the absence of c-di-AMP. Allosterically activated by acetyl-CoA. Inhibited by the biotin-complexing protein avidin. Its function is as follows. Catalyzes a 2-step reaction, involving the ATP-dependent carboxylation of the covalently attached biotin in the first step and the transfer of the carboxyl group to pyruvate in the second, leading to oxaloacetate production. Fulfills an anaplerotic function in B.subtilis as it is necessary for growth on glucose, but is not required for sporulation. The protein is Pyruvate carboxylase (pyc) of Bacillus subtilis (strain 168).